We begin with the raw amino-acid sequence, 39 residues long: Photosystem II reaction center protein L (39 aa).

Residues 18-38 (SLYLGLLLVFVLGILFSSYFF) traverse the membrane as a helical segment.

It belongs to the PsbL family. PSII is composed of 1 copy each of membrane proteins PsbA, PsbB, PsbC, PsbD, PsbE, PsbF, PsbH, PsbI, PsbJ, PsbK, PsbL, PsbM, PsbT, PsbX, PsbY, PsbZ, Psb30/Ycf12, peripheral proteins PsbO, CyanoQ (PsbQ), PsbU, PsbV and a large number of cofactors. It forms dimeric complexes.

The protein localises to the cellular thylakoid membrane. Its function is as follows. One of the components of the core complex of photosystem II (PSII). PSII is a light-driven water:plastoquinone oxidoreductase that uses light energy to abstract electrons from H(2)O, generating O(2) and a proton gradient subsequently used for ATP formation. It consists of a core antenna complex that captures photons, and an electron transfer chain that converts photonic excitation into a charge separation. This subunit is found at the monomer-monomer interface and is required for correct PSII assembly and/or dimerization. The polypeptide is Photosystem II reaction center protein L (Trichormus variabilis (strain ATCC 29413 / PCC 7937) (Anabaena variabilis)).